The following is a 186-amino-acid chain: Putative adenylate kinase (186 aa).

Residues Gly10, Gly12, Lys13, Thr14, and Ser15 each coordinate ATP. An NMP region spans residues 30 to 53 (HLNELIKEEHLYTEVDEKRDSVVA). Positions 108-118 (KRGYSEEKVNE) are LID. ATP is bound at residue Arg109.

It belongs to the adenylate kinase family. AK6 subfamily. As to quaternary structure, interacts with uS11. Not a structural component of 40S pre-ribosomes, but transiently interacts with them by binding to uS11.

The catalysed reaction is AMP + ATP = 2 ADP. The enzyme catalyses ATP + H2O = ADP + phosphate + H(+). In terms of biological role, broad-specificity nucleoside monophosphate (NMP) kinase that catalyzes the reversible transfer of the terminal phosphate group between nucleoside triphosphates and monophosphates. Also has ATPase activity. Involved in the late maturation steps of the 30S ribosomal particles, specifically 16S rRNA maturation. While NMP activity is not required for ribosome maturation, ATPase activity is. Associates transiently with small ribosomal subunit protein uS11. ATP hydrolysis breaks the interaction with uS11. May temporarily remove uS11 from the ribosome to enable a conformational change of the ribosomal RNA that is needed for the final maturation step of the small ribosomal subunit. The chain is Putative adenylate kinase from Methanosarcina acetivorans (strain ATCC 35395 / DSM 2834 / JCM 12185 / C2A).